A 651-amino-acid chain; its full sequence is Acetyl-coenzyme A synthetase (651 aa).

CoA is bound by residues 190–193, Thr-309, and Asn-333; that span reads RGGR. Residues 385 to 387, 409 to 414, Asp-498, and Arg-513 contribute to the ATP site; these read GEP and DTWWQT. Ser-521 is a CoA binding site. Arg-524 is a binding site for ATP. Val-535, His-537, and Val-540 together coordinate Mg(2+). Arg-582 is a binding site for CoA. At Lys-607 the chain carries N6-acetyllysine.

Belongs to the ATP-dependent AMP-binding enzyme family. Mg(2+) serves as cofactor. Acetylated. Deacetylation by the SIR2-homolog deacetylase activates the enzyme.

It catalyses the reaction acetate + ATP + CoA = acetyl-CoA + AMP + diphosphate. Functionally, catalyzes the conversion of acetate into acetyl-CoA (AcCoA), an essential intermediate at the junction of anabolic and catabolic pathways. AcsA undergoes a two-step reaction. In the first half reaction, AcsA combines acetate with ATP to form acetyl-adenylate (AcAMP) intermediate. In the second half reaction, it can then transfer the acetyl group from AcAMP to the sulfhydryl group of CoA, forming the product AcCoA. The chain is Acetyl-coenzyme A synthetase from Xanthobacter autotrophicus (strain ATCC BAA-1158 / Py2).